A 393-amino-acid chain; its full sequence is Phosphoglycerate kinase (393 aa).

Substrate-binding positions include 22 to 24 (DFN), R37, 60 to 63 (HLGR), R119, and R152. Residues K202, G293, E324, and 350 to 353 (GGDS) each bind ATP.

It belongs to the phosphoglycerate kinase family. Monomer.

The protein resides in the cytoplasm. It carries out the reaction (2R)-3-phosphoglycerate + ATP = (2R)-3-phospho-glyceroyl phosphate + ADP. It functions in the pathway carbohydrate degradation; glycolysis; pyruvate from D-glyceraldehyde 3-phosphate: step 2/5. The protein is Phosphoglycerate kinase of Borreliella afzelii (strain PKo) (Borrelia afzelii).